We begin with the raw amino-acid sequence, 117 residues long: Large ribosomal subunit protein bL20c (117 aa).

It belongs to the bacterial ribosomal protein bL20 family.

It is found in the plastid. It localises to the chloroplast. Binds directly to 23S ribosomal RNA and is necessary for the in vitro assembly process of the 50S ribosomal subunit. It is not involved in the protein synthesizing functions of that subunit. In Vitis vinifera (Grape), this protein is Large ribosomal subunit protein bL20c.